The sequence spans 153 residues: Fucose mutarotase (153 aa).

His24 serves as the catalytic Proton donor. Asp32 is a binding site for substrate. Residue Asp69 is part of the active site. Met79, Tyr120, Tyr138, and Asn140 together coordinate substrate. Tyr120 is a catalytic residue.

This sequence belongs to the RbsD / FucU family. Mainly homodimer, but also exists as homotetramer, homooctamer, and homodecamer. The homodimeric form seems catalytically inactive. In terms of tissue distribution, widely expressed in various tissues and cell lines, including kidney, liver, and pancreas, marginally in muscle and testis.

It catalyses the reaction alpha-L-fucose = beta-L-fucose. Its pathway is carbohydrate metabolism; L-fucose metabolism. In terms of biological role, involved in the interconversion between alpha- and beta-L-fucoses. L-Fucose (6-deoxy-L-galactose) exists as alpha-L-fucose (29.5%) and beta-L-fucose (70.5%), the beta-form is metabolized through the salvage pathway. GDP-L-fucose formed either by the de novo or salvage pathways is transported into the endoplasmic reticulum, where it serves as a substrate for N- and O-glycosylations by fucosyltransferases. Fucosylated structures expressed on cell surfaces or secreted in biological fluids are believed to play a critical role in cell-cell adhesion and recognition processes. This chain is Fucose mutarotase (Fuom), found in Mus musculus (Mouse).